The chain runs to 255 residues: MERWRDRLALVTGASGGIGAAVARALVQQGLKVVGCARTVGNIEELAAECKSAGYPGTLIPYRCDLSNEEDILSMFSAVRSQHSGVDICINNAGLARPDTLLSGSTSGWKEMFNVNVLALSICTREACQSMRERKVDDGHIININSMCGHRVPPPAETHFYSATKYAVTALTEGLRQELREARSHIRATCISPGVVETQFAFKLHDKDPEKAAATYEHMKCLKPEDVAEAVIYVLSTPPHVQIGDIQMRPTEQVT.

The N-terminal stretch at 1 to 25 is a signal peptide; the sequence is MERWRDRLALVTGASGGIGAAVARA. NADP(+)-binding positions include 13 to 18, 38 to 39, Glu44, 65 to 66, and Asn92; these read GASGGI, RT, and DL. Residues Ser146 and Tyr161 each coordinate substrate. NADP(+) contacts are provided by residues Tyr161, Lys165, 196–199, and Lys203; that span reads VETQ. Residue Tyr161 is the Proton acceptor of the active site.

This sequence belongs to the short-chain dehydrogenases/reductases (SDR) family.

It localises to the secreted. It carries out the reaction a 3beta-hydroxysteroid + NADP(+) = a 3-oxosteroid + NADPH + H(+). The enzyme catalyses 17beta-estradiol + NAD(+) = estrone + NADH + H(+). It catalyses the reaction 17beta-estradiol + NADP(+) = estrone + NADPH + H(+). Its pathway is steroid biosynthesis; estrogen biosynthesis. Inhibited by flavonoids including apigenin, luteolin, genistein, kaempferol and quercetin and also by carbenoxolone, zearalenone, glycyrrhetinic, curcumin and flufenamic acid. Catalyzes the conversion of the 17-keto group of estrone, 4- and 5-androstenes and 5-alpha-androstanes into their 17-beta-hydroxyl metabolites and the conversion of the 3-keto group of 3-, 3,17- and 3,20- diketosteroids into their 3-hydroxyl metabolites. Exhibits reductive 3-beta-hydroxysteroid dehydrogenase activity toward 5-beta-androstanes, 5-beta-pregnanes, 4-pregnenes and bile acids. May also reduce endogenous and exogenous alpha-dicarbonyl compounds and xenobiotic alicyclic ketones. The chain is Dehydrogenase/reductase SDR family member 11 (DHRS11) from Bos taurus (Bovine).